A 486-amino-acid polypeptide reads, in one-letter code: Lipase 1 (486 aa).

Cysteines 58 and 82 form a disulfide. Catalysis depends on Ser193, which acts as the Acyl-ester intermediate. Catalysis depends on Asp303, which acts as the Charge relay system. Residue Asn332 is glycosylated (N-linked (GlcNAc...) asparagine). The Charge relay system role is filled by His392.

It belongs to the type-B carboxylesterase/lipase family.

It carries out the reaction a triacylglycerol + H2O = a diacylglycerol + a fatty acid + H(+). The protein is Lipase 1 (LIP1) of Yarrowia lipolytica (strain CLIB 122 / E 150) (Yeast).